Consider the following 623-residue polypeptide: DNA-directed RNA polymerase III subunit rpc3 (623 aa).

Disordered regions lie at residues 131–164 (RSDASKTNGVNEGEHDRPEGENETNGTNGEHVSD), 249–282 (RGVKRSQTNGVSDDNETEKARFDYDDGEDEDEEN), and 381–412 (SLGPTNTPANNRLGKRTFDDTVDDNDDDHGAT). Residues 273 to 282 (DDGEDEDEEN) are compositionally biased toward acidic residues. The tract at residues 550–571 (TYKAMSRCLQRLKFERGRLKDF) is leucine-zipper.

The protein belongs to the RNA polymerase beta chain family. Component of the RNA polymerase III (Pol III) complex consisting of 17 subunits.

It is found in the nucleus. Its function is as follows. DNA-dependent RNA polymerase catalyzes the transcription of DNA into RNA using the four ribonucleoside triphosphates as substrates. Specific core component of RNA polymerase III which synthesizes small RNAs, such as 5S rRNA and tRNAs. This Emericella nidulans (strain FGSC A4 / ATCC 38163 / CBS 112.46 / NRRL 194 / M139) (Aspergillus nidulans) protein is DNA-directed RNA polymerase III subunit rpc3 (rpc82).